Here is a 142-residue protein sequence, read N- to C-terminus: Hemoglobin subunit beta-C (142 aa).

Residues 1–142 enclose the Globin domain; that stretch reads MPNKALITGF…VASALAHRYH (142 aa). Residues H59 and H88 each contribute to the heme b site.

It belongs to the globin family. Heterotetramer of two alpha chains and two beta chains. Red blood cells.

Functionally, involved in oxygen transport from the lung to the various peripheral tissues. This is Hemoglobin subunit beta-C (HBBC) from Capra hircus (Goat).